Consider the following 236-residue polypeptide: V-set and transmembrane domain-containing protein 2A (236 aa).

Positions 1 to 24 are cleaved as a signal peptide; sequence MMGIFLVYVGFVFFSVLYVQQGLS. Residues 27-143 enclose the Ig-like V-type domain; it reads AKFTEFPRNV…YGELQEHKAQ (117 aa). N-linked (GlcNAc...) asparagine glycosylation occurs at asparagine 35. Cysteines 48 and 127 form a disulfide. N-linked (GlcNAc...) asparagine glycosylation is present at asparagine 175. Residues 184–199 are compositionally biased toward polar residues; it reads IHGSANQRTHSTSSPQ. Residues 184 to 206 form a disordered region; that stretch reads IHGSANQRTHSTSSPQVVAKIPK.

As to quaternary structure, homodimer. Post-translationally, N-glycosylated. N-linked glycosylation is critical for secretion but not for preadipocyte cell differentiation activity.

Its subcellular location is the secreted. Functionally, plays a role in the regulation of the early stage of white and brown preadipocyte cell differentiation. Promotes adipogenic commitment of preadipocytes by increasing gene expression of the transcription factor PPARG in a BMP4-dependent signaling pathway. This is V-set and transmembrane domain-containing protein 2A from Homo sapiens (Human).